Here is an 84-residue protein sequence, read N- to C-terminus: Small ribosomal subunit protein uS17 (84 aa).

The protein belongs to the universal ribosomal protein uS17 family. In terms of assembly, part of the 30S ribosomal subunit.

One of the primary rRNA binding proteins, it binds specifically to the 5'-end of 16S ribosomal RNA. The chain is Small ribosomal subunit protein uS17 from Alkaliphilus oremlandii (strain OhILAs) (Clostridium oremlandii (strain OhILAs)).